A 215-amino-acid chain; its full sequence is Uracil phosphoribosyltransferase (215 aa).

5-phospho-alpha-D-ribose 1-diphosphate-binding positions include Arg-77, Arg-102, and 129 to 137; that span reads DPMLATGGS. Uracil-binding positions include Ile-193 and 198-200; that span reads GDA. A 5-phospho-alpha-D-ribose 1-diphosphate-binding site is contributed by Asp-199.

It belongs to the UPRTase family. Mg(2+) is required as a cofactor.

It carries out the reaction UMP + diphosphate = 5-phospho-alpha-D-ribose 1-diphosphate + uracil. It functions in the pathway pyrimidine metabolism; UMP biosynthesis via salvage pathway; UMP from uracil: step 1/1. With respect to regulation, allosterically activated by GTP. Its function is as follows. Catalyzes the conversion of uracil and 5-phospho-alpha-D-ribose 1-diphosphate (PRPP) to UMP and diphosphate. The polypeptide is Uracil phosphoribosyltransferase (Corynebacterium urealyticum (strain ATCC 43042 / DSM 7109)).